Here is a 1003-residue protein sequence, read N- to C-terminus: MECVQTLWLSLALALARGSWVVRGHPQPCGVPTRAGASVRLAALLPRAPAARARVLAALATPSPRLPHNLSLELVAVASPTRDPASLARGLCQVLAPPGVVASITFPEARPELRLLQFLAAATETPVLSVLRREVRAPLGAPTPFHLQLDWASPLETILDVLVSLVRAHAWEDIALVLCRVRDPSGLVTLWTSRASQAPKFVLDLSQLDSGNDSLRATLALLGTLEGGGTPVSAAVLLGCSTAHAHEVLEAAPPGPQWLLGTPLPAEALPKTGLPPGVLVLGETGQPSLEAAVHDMVELVARALSSMALMHPERALLPAAVNCEDLKTGGSESTARTLARFLSNTSFQGRTGAVWVAGSSQVHVSRHFKVWSLRRDPLGAPAWATVGSWQDGQLDFQPGAAALRVPSPSGTQARPKLRVVTLVEHPFVFTRESDEDGQCPAGQLCLDPGTNDSARLDALFTALENGSVPRTLRRCCYGYCIDLLERLAEDLAFDFELYIVGDGKYGALRDGRWTGLVGDLLAGRAHMAVTSFSINSARSQVVDFTSPFFSTSLGIMVRTRDTASPIGAFMWPLHWSMWVGVFAALHLTALFLTLYEWRSPYGLTPRGRNRGTVFSYSSALNLCYAILFGRTVSSKTPKCPTGRFLMNLWAIFCLLVLSSYTANLAAVMVGDKTFEELSGIHDPKLHHPSQGFRFGTVWESSAEAYIKASFPEMHAHMRRHSAPTTPHGVAMLTSDPPKLNAFIMDKSLLDYEVSIDADCKLLTVGKPFAIEGYGIGLPQNSPLTSNLSEFISRYKSSGFIDLLHDKWYKMVPCGKRVFAVTETLQMGVYHLSGLFVLLCLGLGSALLTSLGEHVFYRLVLPRIRRGNKLQYWLHTSQKIHRALNTGPPEGQQERAEQECSGPKEEQPAADGAGRWRRVRRAVVERERRVRFLLEPGEAGGDHPWLCSNGPGVQAELRELELRIEAARERLRSALLRRGELRAQLGDGTRLRPLRLLHAAPAES.

Residues 1–24 (MECVQTLWLSLALALARGSWVVRG) form the signal peptide. Residues 25–574 (HPQPCGVPTR…PIGAFMWPLH (550 aa)) are Extracellular-facing. N-linked (GlcNAc...) asparagine glycosylation is found at N69, N212, N344, N451, and N465. Intrachain disulfides connect C439–C475 and C445–C476. Residues S531, S533, and R538 each contribute to the glycine site. S533 and R538 together coordinate D-serine. A helical transmembrane segment spans residues 575–594 (WSMWVGVFAALHLTALFLTL). Residues 595–615 (YEWRSPYGLTPRGRNRGTVFS) are Cytoplasmic-facing. Positions 616–627 (YSSALNLCYAIL) form an intramembrane region, discontinuously helical. Over 628-641 (FGRTVSSKTPKCPT) the chain is Cytoplasmic. A helical membrane pass occupies residues 642–661 (GRFLMNLWAIFCLLVLSSYT). Over 662-832 (ANLAAVMVGD…TLQMGVYHLS (171 aa)) the chain is Extracellular. Position 701 (S701) interacts with glycine. D-serine-binding residues include S701, A702, and D745. D745 contributes to the glycine binding site. Residue N786 is glycosylated (N-linked (GlcNAc...) asparagine). The chain crosses the membrane as a helical span at residues 833-848 (GLFVLLCLGLGSALLT). Residues 849 to 1003 (SLGEHVFYRL…RLLHAAPAES (155 aa)) are Cytoplasmic-facing. The interval 883–912 (LNTGPPEGQQERAEQECSGPKEEQPAADGA) is disordered. Residues 891–906 (QQERAEQECSGPKEEQ) show a composition bias toward basic and acidic residues. The stretch at 947–986 (SNGPGVQAELRELELRIEAARERLRSALLRRGELRAQLGD) forms a coiled coil. Positions 952 to 985 (VQAELRELELRIEAARERLRSALLRRGELRAQLG) are involved in the trafficking and surface expression of NMDARs.

This sequence belongs to the glutamate-gated ion channel (TC 1.A.10.1) family. NR3B/GRIN3B subfamily. In terms of assembly, forms heterotetrameric channels that contain at least two GluN1 subunits and at least a combination of one GluN2 and one GluN3 subunits (in vitro). Forms heterotetrameric channels composed of two GluN1/zeta subunits (GRIN1), and two identical GluN3 subunits (GRIN3A or GRIN3B) (in vitro). Does not form functional homomeric channels. Expressed in the facial nucleus and the ambiguus nucleus of the brainstem, pons, medulla, spinal cord and cerebellum.

Its subcellular location is the cell membrane. The protein resides in the postsynaptic cell membrane. The enzyme catalyses Ca(2+)(in) = Ca(2+)(out). It carries out the reaction Na(+)(in) = Na(+)(out). Component of a non-conventional N-methyl-D-aspartate (NMDA) receptors (NMDARs) that function as heterotetrameric, ligand-gated cation channels with low calcium permeability and low voltage-dependent block by Mg(2+). Forms glutamatergic receptor complexes with GluN1 and GluN2 subunits which are activated by glycine binding to the GluN1 and GluN3 subunits and L-glutamate binding to GluN2 subunits. Forms excitatory glycinergic receptor complexes with GluN1 alone which are activated by glycine binding to the GluN1 and GluN3 subunits. GluN3B subunit also binds D-serine and, in the absence of glycine, activates glycinergic receptor complexes, but with lower efficacy than glycine. Each GluN3 subunit confers differential attributes to channel properties, including activation, deactivation and desensitization kinetics, pH sensitivity, Ca2(+) permeability, and binding to allosteric modulators. The sequence is that of Glutamate receptor ionotropic, NMDA 3B from Mus musculus (Mouse).